Reading from the N-terminus, the 275-residue chain is 3-methyl-2-oxobutanoate hydroxymethyltransferase (275 aa).

Residues aspartate 49 and aspartate 88 each coordinate Mg(2+). Residues 49–50 (DS), aspartate 88, and lysine 118 each bind 3-methyl-2-oxobutanoate. A Mg(2+)-binding site is contributed by glutamate 120. Glutamate 187 acts as the Proton acceptor in catalysis.

It belongs to the PanB family. As to quaternary structure, homodecamer; pentamer of dimers. It depends on Mg(2+) as a cofactor.

It localises to the cytoplasm. It catalyses the reaction 3-methyl-2-oxobutanoate + (6R)-5,10-methylene-5,6,7,8-tetrahydrofolate + H2O = 2-dehydropantoate + (6S)-5,6,7,8-tetrahydrofolate. The protein operates within cofactor biosynthesis; (R)-pantothenate biosynthesis; (R)-pantoate from 3-methyl-2-oxobutanoate: step 1/2. In terms of biological role, catalyzes the reversible reaction in which hydroxymethyl group from 5,10-methylenetetrahydrofolate is transferred onto alpha-ketoisovalerate to form ketopantoate. The polypeptide is 3-methyl-2-oxobutanoate hydroxymethyltransferase (Brucella suis (strain ATCC 23445 / NCTC 10510)).